We begin with the raw amino-acid sequence, 516 residues long: 4-hydroxybenzoate brominase (decarboxylating) (516 aa).

Residues serine 13, glutamate 32, valine 40, phenylalanine 41, histidine 51, valine 102, and glutamine 365 each contribute to the FAD site.

This sequence belongs to the FMO family. FAD is required as a cofactor.

It carries out the reaction 2 bromide + 4-hydroxybenzoate + 2 NADPH + 2 O2 + 5 H(+) = 2,4-dibromophenol + CO2 + 2 NADP(+) + 4 H2O. The enzyme catalyses bromide + 4-hydroxybenzoate + NADPH + O2 + 2 H(+) = 3-bromo-4-hydroxybenzoate + NADP(+) + 2 H2O. It catalyses the reaction 3-bromo-4-hydroxybenzoate + bromide + NADPH + O2 + 3 H(+) = 2,4-dibromophenol + CO2 + NADP(+) + 2 H2O. The catalysed reaction is 3,4-dihydroxybenzoate + 2 bromide + 2 NADPH + 2 O2 + 5 H(+) = 3,5-dibromobenzene-1,2-diol + CO2 + 2 NADP(+) + 4 H2O. It carries out the reaction 3,4-dihydroxybenzoate + bromide + NADPH + O2 + 2 H(+) = 3-bromo-4,5-dihydroxybenzoate + NADP(+) + 2 H2O. The enzyme catalyses 3-bromo-4,5-dihydroxybenzoate + bromide + NADPH + O2 + 3 H(+) = 3,5-dibromobenzene-1,2-diol + CO2 + NADP(+) + 2 H2O. Functionally, brominase involved in the biosynthesis of polybrominated aromatic organic compounds. Catalyzes the bromination of 4-hydroxybenzoate (4-HBA) to 3-bromo-4-hydroxybenzoate, followed by bromination and decarboxylation of 3-bromo-4-hydroxybenzoate to 2,4-dibromophenol. Can also use 3,4-dihydroxybenzoate, with lower efficiency, forming 3-bromo-4,5-dihydroxybenzoate and 3,5-dibromobenzene-1,2-diol. The sequence is that of 4-hydroxybenzoate brominase (decarboxylating) from Marinomonas mediterranea (strain ATCC 700492 / JCM 21426 / NBRC 103028 / MMB-1).